Consider the following 688-residue polypeptide: Translation initiation factor IF-2 (688 aa).

Basic and acidic residues-rich tracts occupy residues 53–62 and 86–95; these read GKEKSEKTKE and KRDDKNEKVN. Residues 53–100 are disordered; that stretch reads GKEKSEKTKEEDDEIETTAKNPIKESMNNKKSNKRDDKNEKVNTENAE. A tr-type G domain is found at 187-354; sequence KRSPIITVMG…MILLSSEILE (168 aa). Residues 196–203 form a G1 region; sequence GHVDHGKT. 196-203 contributes to the GTP binding site; it reads GHVDHGKT. A G2 region spans residues 221 to 225; sequence GITQH. Residues 242–245 form a G3 region; that stretch reads DTPG. Residues 242 to 246 and 296 to 299 each bind GTP; these read DTPGH and NKID. The G4 stretch occupies residues 296 to 299; it reads NKID. Positions 332–334 are G5; sequence SAH.

It belongs to the TRAFAC class translation factor GTPase superfamily. Classic translation factor GTPase family. IF-2 subfamily.

It is found in the cytoplasm. In terms of biological role, one of the essential components for the initiation of protein synthesis. Protects formylmethionyl-tRNA from spontaneous hydrolysis and promotes its binding to the 30S ribosomal subunits. Also involved in the hydrolysis of GTP during the formation of the 70S ribosomal complex. The polypeptide is Translation initiation factor IF-2 (Clostridium botulinum (strain ATCC 19397 / Type A)).